The primary structure comprises 307 residues: Thymidylate synthase (307 aa).

The interval 1–22 (MLVEGSELQSGAQQPRTEAPQH) is disordered. Positions 7–16 (ELQSGAQQPR) are enriched in polar residues. R44 lines the dUMP pocket. Phosphoserine is present on S108. Residues 169 to 170 (RR), 189 to 190 (CH), 209 to 212 (RSGD), N220, and 250 to 252 (HIY) contribute to the dUMP site. C189 (nucleophile) is an active-site residue. D212 contacts (6R)-5,10-methylene-5,6,7,8-tetrahydrofolate. Glycyl lysine isopeptide (Lys-Gly) (interchain with G-Cter in SUMO2) cross-links involve residues K286 and K302. A306 contributes to the (6R)-5,10-methylene-5,6,7,8-tetrahydrofolate binding site.

This sequence belongs to the thymidylate synthase family. As to quaternary structure, homodimer.

It is found in the nucleus. Its subcellular location is the cytoplasm. It localises to the mitochondrion. The protein localises to the mitochondrion matrix. The protein resides in the mitochondrion inner membrane. The enzyme catalyses dUMP + (6R)-5,10-methylene-5,6,7,8-tetrahydrofolate = 7,8-dihydrofolate + dTMP. It functions in the pathway pyrimidine metabolism; dTTP biosynthesis. In terms of biological role, catalyzes the reductive methylation of 2'-deoxyuridine 5'-monophosphate (dUMP) to thymidine 5'-monophosphate (dTMP), using the cosubstrate, 5,10- methylenetetrahydrofolate (CH2H4folate) as a 1-carbon donor and reductant and contributes to the de novo mitochondrial thymidylate biosynthesis pathway. This is Thymidylate synthase (Tyms) from Rattus norvegicus (Rat).